Reading from the N-terminus, the 97-residue chain is Protein RESPONSE TO LOW SULFUR 3 (97 aa).

Residues Val8–Arg42 adopt a coiled-coil conformation.

This is Protein RESPONSE TO LOW SULFUR 3 from Arabidopsis thaliana (Mouse-ear cress).